The sequence spans 341 residues: Ribosomal RNA small subunit methyltransferase H (341 aa).

Residues 47–49 (GGY), Asp64, Phe91, Asp109, and Gln116 each bind S-adenosyl-L-methionine.

Belongs to the methyltransferase superfamily. RsmH family.

The protein resides in the cytoplasm. It carries out the reaction cytidine(1402) in 16S rRNA + S-adenosyl-L-methionine = N(4)-methylcytidine(1402) in 16S rRNA + S-adenosyl-L-homocysteine + H(+). Its function is as follows. Specifically methylates the N4 position of cytidine in position 1402 (C1402) of 16S rRNA. The protein is Ribosomal RNA small subunit methyltransferase H of Sinorhizobium medicae (strain WSM419) (Ensifer medicae).